A 247-amino-acid chain; its full sequence is TLC domain-containing protein 1 (247 aa).

The signal sequence occupies residues 1 to 35 (MPRLLHPALPLLLGATLTFRALRRALCRLPLPVHV). Topologically, residues 36-46 (RADPLRTWRWH) are extracellular. The TLC domain occupies 40–234 (LRTWRWHNLL…LLRSDFCPEH (195 aa)). A helical membrane pass occupies residues 47–67 (NLLVSFAHSIVSGIWALLCVW). At 68–83 (QTPDMLVEIETAWSLS) the chain is on the cytoplasmic side. Residues 84 to 104 (GYLLVCFSAGYFIHDTVDIVA) traverse the membrane as a helical segment. At 105-123 (SGQTRASWEYLVHHVMAMG) the chain is on the extracellular side. Positions 124-144 (AFFSGIFWSSFVGGGVLTLLV) form an intramembrane region, helical. Residues 145-173 (EVSNIFLTIRMMMKISNAQDHLLYRVNKY) lie on the Extracellular side of the membrane. The helical transmembrane segment at 174–194 (VNLVMYFLFRLAPQAYLTHFF) threads the bilayer. Topologically, residues 195–201 (LRYVNQR) are cytoplasmic. Residues 202-222 (TLGTFLLGILLMLDVMIIIYF) traverse the membrane as a helical segment. The Extracellular portion of the chain corresponds to 223 to 247 (SRLLRSDFCPEHVPKKQHKDKFLTE).

It is found in the cell membrane. Regulates the composition and fluidity of the plasma membrane. Inhibits the incorporation of membrane-fluidizing phospholipids containing omega-3 long-chain polyunsaturated fatty acids (LCPUFA) and thereby promotes membrane rigidity. Does not appear to have any effect on LCPUFA synthesis. The polypeptide is TLC domain-containing protein 1 (TLCD1) (Homo sapiens (Human)).